The following is a 339-amino-acid chain: tRNA N6-adenosine threonylcarbamoyltransferase (339 aa).

Residues His114 and His118 each coordinate Fe cation. Substrate is bound by residues 137 to 141 (VVSGG), Asp170, Gly183, Asp187, and Asn277. Asp305 contacts Fe cation.

This sequence belongs to the KAE1 / TsaD family. Fe(2+) is required as a cofactor.

It localises to the cytoplasm. It catalyses the reaction L-threonylcarbamoyladenylate + adenosine(37) in tRNA = N(6)-L-threonylcarbamoyladenosine(37) in tRNA + AMP + H(+). Required for the formation of a threonylcarbamoyl group on adenosine at position 37 (t(6)A37) in tRNAs that read codons beginning with adenine. Is involved in the transfer of the threonylcarbamoyl moiety of threonylcarbamoyl-AMP (TC-AMP) to the N6 group of A37, together with TsaE and TsaB. TsaD likely plays a direct catalytic role in this reaction. This chain is tRNA N6-adenosine threonylcarbamoyltransferase, found in Clostridium perfringens (strain SM101 / Type A).